Here is a 2037-residue protein sequence, read N- to C-terminus: Protein SWOLLEN 1 (2037 aa).

Disordered regions lie at residues 141-179, 454-487, 504-531, 567-637, 686-705, 837-893, 1011-1045, 1148-1197, 1729-1748, 1793-1812, and 1841-2037; these read VEPG…VKTD, REGG…NDRD, SVGY…TDKS, KTSS…KDAV, SLPI…DNTA, VGSP…SGGK, ATPE…PMIP, KHVQ…ESGP, SGET…KRPR, KSTR…TGLQ, and EAST…QSKK. Over residues 147–157 the composition is skewed to basic and acidic residues; the sequence is SHERSLSKEET. Residues 158 to 176 show a composition bias toward polar residues; that stretch reads VNLQPNPSVDDTPGESSVV. Basic and acidic residues predominate over residues 454–466; that stretch reads REGGVSKKSDNEG. The span at 504-514 shows a compositional bias: low complexity; sequence SVGYVSGGSTS. Positions 515-526 are enriched in polar residues; that stretch reads ELAESESQSDSI. Positions 841–852 are enriched in low complexity; that stretch reads STSSLDKTAAKS. The span at 853 to 865 shows a compositional bias: basic residues; it reads SKAKSERKPRRTS. Polar residues-rich tracts occupy residues 1025–1041 and 1151–1171; these read ETPS…SGTN and QSGT…TSTV. Basic residues predominate over residues 1179–1189; sequence TRVKSRKRKKM. The span at 1794–1805 shows a compositional bias: basic and acidic residues; sequence STREENKPDPLR. Composition is skewed to polar residues over residues 1874 to 1886, 1942 to 1964, and 2013 to 2023; these read KTIS…TISR, EEQT…STNK, and LQTSMMTSKIP. Basic residues predominate over residues 2028 to 2037; that stretch reads SKSHLSQSKK.

As to quaternary structure, interacts with importin alpha IMPA1 and IMPA2, required for nuclear-localized proteins import. In terms of tissue distribution, mainly expressed in seedlings, flower buds and stems, and, to a lower extent, in leaves and siliques.

It localises to the nucleus. Its function is as follows. Under salt stress, appears to prevent the accumulation of reactive oxygen species (ROS) in roots and required for the maintenance of cell wall integrity (cellulose, pectin and lignin composition) by interacting with importin alpha (e.g. IMPA1 and IMPA2) and binding to the promoter of several ROS- and cell wall-related genes to regulate their expression. Necessary for cells organization in meristems and root elongation zones as well as for root elongation in high salinity, but not upon osmotic stress. The protein is Protein SWOLLEN 1 of Arabidopsis thaliana (Mouse-ear cress).